Consider the following 775-residue polypeptide: Mitosis inducer protein kinase cdr2 (775 aa).

The Protein kinase domain occupies 10-262 (WELGLSLGSG…MEQIREHPFL (253 aa)). ATP contacts are provided by residues 16–24 (LGSGGPNSS) and lysine 39. Aspartate 133 functions as the Proton acceptor in the catalytic mechanism. Residues serine 309, serine 311, and serine 476 each carry the phosphoserine modification. Low complexity predominate over residues 549–563 (NNIDNNNYNQPYANA). Residues 549 to 620 (NNIDNNNYNQ…TKKKLSGSPF (72 aa)) are disordered. The segment covering 584–593 (LSQSPASYDS) has biased composition (polar residues). Residues serine 587 and serine 632 each carry the phosphoserine modification.

The protein belongs to the protein kinase superfamily. CAMK Ser/Thr protein kinase family. NIM1 subfamily. As to quaternary structure, interacts with blt1 and mid1. Post-translationally, autophosphorylated.

It carries out the reaction L-seryl-[protein] + ATP = O-phospho-L-seryl-[protein] + ADP + H(+). The catalysed reaction is L-threonyl-[protein] + ATP = O-phospho-L-threonyl-[protein] + ADP + H(+). Functionally, acts as a mitotic inducer. In G2 it negatively regulates wee1, a mitotic inhibitor. Also has a role in cytokinesis where it required for proper septum formation. The polypeptide is Mitosis inducer protein kinase cdr2 (cdr2) (Schizosaccharomyces pombe (strain 972 / ATCC 24843) (Fission yeast)).